A 382-amino-acid polypeptide reads, in one-letter code: Carbamoyl phosphate synthase small chain (382 aa).

Residues 1–189 are CPSase; it reads MIKSALLVLE…GLPEAKKEDE (189 aa). Residues Ser-47, Gly-241, and Gly-243 each contribute to the L-glutamine site. The Glutamine amidotransferase type-1 domain occupies 193-380; that stretch reads HVVAYDFGAK…IELIEQYRKT (188 aa). The active-site Nucleophile is Cys-269. The L-glutamine site is built by Leu-270, Gln-273, Asn-311, Gly-313, and Phe-314. Residues His-353 and Glu-355 contribute to the active site.

Belongs to the CarA family. As to quaternary structure, composed of two chains; the small (or glutamine) chain promotes the hydrolysis of glutamine to ammonia, which is used by the large (or ammonia) chain to synthesize carbamoyl phosphate. Tetramer of heterodimers (alpha,beta)4.

The enzyme catalyses hydrogencarbonate + L-glutamine + 2 ATP + H2O = carbamoyl phosphate + L-glutamate + 2 ADP + phosphate + 2 H(+). The catalysed reaction is L-glutamine + H2O = L-glutamate + NH4(+). Its pathway is amino-acid biosynthesis; L-arginine biosynthesis; carbamoyl phosphate from bicarbonate: step 1/1. It participates in pyrimidine metabolism; UMP biosynthesis via de novo pathway; (S)-dihydroorotate from bicarbonate: step 1/3. Functionally, small subunit of the glutamine-dependent carbamoyl phosphate synthetase (CPSase). CPSase catalyzes the formation of carbamoyl phosphate from the ammonia moiety of glutamine, carbonate, and phosphate donated by ATP, constituting the first step of 2 biosynthetic pathways, one leading to arginine and/or urea and the other to pyrimidine nucleotides. The small subunit (glutamine amidotransferase) binds and cleaves glutamine to supply the large subunit with the substrate ammonia. This chain is Carbamoyl phosphate synthase small chain, found in Escherichia coli O157:H7.